A 624-amino-acid polypeptide reads, in one-letter code: Kelch-like ECH-associated protein 1 (624 aa).

A disordered region spans residues methionine 1 to alanine 27. The residue at position 38 (cysteine 38) is an S-(2-succinyl)cysteine. The region spanning cysteine 77–glutamate 149 is the BTB domain. Residue arginine 135 forms an N5-[4-(S-L-cysteinyl)-5-methyl-1H-imidazol-2-yl]-L-ornithine (Arg-Cys) (interchain with C-151 in KEAP1) linkage. S-(2-succinyl)cysteine is present on residues cysteine 151 and cysteine 241. Cysteine 151 is modified (S-(2,3-dicarboxypropyl)cysteine; alternate). An S-nitrosocysteine; alternate modification is found at cysteine 151. Cysteine 151 participates in a covalent cross-link: N5-[4-(S-L-cysteinyl)-5-methyl-1H-imidazol-2-yl]-L-ornithine (Cys-Arg) (interchain with R-135 in KEAP1). Residues alanine 184–glutamine 286 enclose the BACK domain. S-(2,3-dicarboxypropyl)cysteine occurs at positions 257 and 273. Cysteine 288 and cysteine 319 each carry S-(2-succinyl)cysteine. Cysteine 288 carries the post-translational modification S-(2,3-dicarboxypropyl)cysteine; alternate. Kelch repeat units lie at residues leucine 327–glycine 372, leucine 373–glycine 423, histidine 424–arginine 470, leucine 471–asparagine 517, isoleucine 519–glycine 564, and arginine 565–glutamate 611. Cysteine 434 bears the S-cGMP-cysteine mark. Cysteine 613 is modified (S-(2-succinyl)cysteine).

The protein belongs to the KEAP1 family. As to quaternary structure, component of the BCR(KEAP1) E3 ubiquitin ligase complex, at least composed of 2 molecules of CUL3, 2 molecules of KEAP1, and RBX1. Interacts with NFE2L2/NRF2; the interaction is direct. Forms a ternary complex with NFE2L2/NRF2 and PGAM5. Interacts with (phosphorylated) SQSTM1/p62; the interaction is direct and inactivates the BCR(KEAP1) complex by sequestering it in inclusion bodies, promoting its degradation. Interacts with NFE2L1. Interacts with BPTF and PTMA. Interacts with MAP1LC3B. Interacts indirectly with ENC1. Interacts with SESN1 and SESN2. Interacts with HSP90AA1 and HSP90AB1. Interacts with PGCKA1; this interaction prevents the ubiquitination of KEAP1 by TRIM25, thus protecting KEAP1 protein from degradation. Non-enzymatic covalent modifications of reactive cysteines by electrophile metabolites inactivate the BCR(KEAP1) complex. Accumulation of fumarate promotes the formation of cysteine S-succination (S-(2-succinyl)cysteine), leading to inactivate the BCR(KEAP1) complex and promote NFE2L2/NRF2 nuclear accumulation and activation. Nitric oxide-dependent 8-Nitro-cGMP formation promotes cysteine guanylation (S-cGMP-cysteine), leading to NFE2L2/NRF2 nuclear accumulation and activation. Itaconate, an anti-inflammatory metabolite generated in response to lipopolysaccharide, alkylates cysteines, activating NFE2L2/NRF2. Methylglyoxal, a reactive metabolite that accumulates when the glycolytic enzyme PGK1 is inhibited, promotes formation of a methylimidazole cross-link between proximal Cys-151 and Arg-135 on another KEAP1 molecule, resulting in an inactive dimer that inactivates the BCR(KEAP1) complex. Post-translationally, degraded via a proteasomal-independent process during selective autophagy: interaction with phosphorylated SQSTM1/p62 sequesters KEAP1 in inclusion bodies, leading to its degradation. In terms of processing, auto-ubiquitinated by the BCR(KEAP1) complex. Quinone-induced oxidative stress, but not sulforaphane, increases its ubiquitination. Ubiquitination and subsequent degradation is most pronounced following prolonged exposure of cells to oxidative stress, particularly in glutathione-deficient cells that are highly susceptible to oxidative stress. Deubiquitinated by USP25; leading to stabilization. Ubiquitinated by TRIM25; leading to degradation upon ER stress.

Its subcellular location is the cytoplasm. It localises to the nucleus. It functions in the pathway protein modification; protein ubiquitination. Ubiquitin ligase activity of the BCR(KEAP1) complex is inhibited by oxidative stress and electrophile metabolites such as sulforaphane. Electrophile metabolites react with reactive cysteine residues in KEAP1 and trigger non-enzymatic covalent modifications of these cysteine residues, leading to inactivate the ubiquitin ligase activity of the BCR(KEAP1) complex. Selective autophagy also inactivates the BCR(KEAP1) complex via interaction between KEAP1 and SQSTM1/p62, which sequesters the complex in inclusion bodies and promotes its degradation. Substrate-specific adapter of a BCR (BTB-CUL3-RBX1) E3 ubiquitin ligase complex that regulates the response to oxidative stress by targeting NFE2L2/NRF2 for ubiquitination. KEAP1 acts as a key sensor of oxidative and electrophilic stress: in normal conditions, the BCR(KEAP1) complex mediates ubiquitination and degradation of NFE2L2/NRF2, a transcription factor regulating expression of many cytoprotective genes. In response to oxidative stress, different electrophile metabolites trigger non-enzymatic covalent modifications of highly reactive cysteine residues in KEAP1, leading to inactivate the ubiquitin ligase activity of the BCR(KEAP1) complex, promoting NFE2L2/NRF2 nuclear accumulation and expression of phase II detoxifying enzymes. In response to selective autophagy, KEAP1 is sequestered in inclusion bodies following its interaction with SQSTM1/p62, leading to inactivation of the BCR(KEAP1) complex and activation of NFE2L2/NRF2. The BCR(KEAP1) complex also mediates ubiquitination of SQSTM1/p62, increasing SQSTM1/p62 sequestering activity and degradation. The BCR(KEAP1) complex also targets BPTF and PGAM5 for ubiquitination and degradation by the proteasome. The protein is Kelch-like ECH-associated protein 1 of Sus scrofa (Pig).